Consider the following 392-residue polypeptide: S-adenosylmethionine synthase (392 aa).

Residue E10 participates in Mg(2+) binding. H16 is an ATP binding site. E44 is a binding site for K(+). 2 residues coordinate L-methionine: E57 and Q100. Residues D168–K170, S236–F239, D247, R253–K254, A270, K274, and K278 each bind ATP. D247 contributes to the L-methionine binding site. K278 is a binding site for L-methionine.

Belongs to the AdoMet synthase family. As to quaternary structure, homotetramer. Mn(2+) is required as a cofactor. It depends on Mg(2+) as a cofactor. Requires Co(2+) as cofactor. The cofactor is K(+).

It localises to the cytoplasm. The enzyme catalyses L-methionine + ATP + H2O = S-adenosyl-L-methionine + phosphate + diphosphate. The protein operates within amino-acid biosynthesis; S-adenosyl-L-methionine biosynthesis; S-adenosyl-L-methionine from L-methionine: step 1/1. Catalyzes the formation of S-adenosylmethionine from methionine and ATP. The reaction comprises two steps that are both catalyzed by the same enzyme: formation of S-adenosylmethionine (AdoMet) and triphosphate, and subsequent hydrolysis of the triphosphate. The chain is S-adenosylmethionine synthase (SAMS) from Phaseolus lunatus (Lima bean).